The following is a 126-amino-acid chain: Acidic phospholipase A2 2 (126 aa).

The propeptide occupies Ser-1–Leu-7. Cystine bridges form between Cys-18/Cys-78, Cys-33/Cys-125, Cys-35/Cys-51, Cys-50/Cys-106, Cys-57/Cys-99, Cys-67/Cys-92, and Cys-85/Cys-97. 3 residues coordinate Ca(2+): Tyr-34, Gly-36, and Gly-38. Residue His-54 is part of the active site. Asp-55 is a binding site for Ca(2+). Asp-100 is a catalytic residue.

It belongs to the phospholipase A2 family. Group I subfamily. D49 sub-subfamily. Heterodimer formed between two homologous isoforms: isoform 1 and isoform 2. Requires Ca(2+) as cofactor. In terms of tissue distribution, expressed by the venom gland.

Its subcellular location is the secreted. The enzyme catalyses a 1,2-diacyl-sn-glycero-3-phosphocholine + H2O = a 1-acyl-sn-glycero-3-phosphocholine + a fatty acid + H(+). PLA2 catalyzes the calcium-dependent hydrolysis of the 2-acyl groups in 3-sn-phosphoglycerides. In Naja sagittifera (Andaman cobra), this protein is Acidic phospholipase A2 2.